The primary structure comprises 37 residues: Large ribosomal subunit protein bL36 (37 aa).

It belongs to the bacterial ribosomal protein bL36 family.

The sequence is that of Large ribosomal subunit protein bL36 from Desulfotalea psychrophila (strain LSv54 / DSM 12343).